Reading from the N-terminus, the 545-residue chain is T-complex protein 1 subunit gamma (545 aa).

The residue at position 1 (M1) is an N-acetylmethionine. Residues 1 to 24 (MMGHRPVLVLSQNTKRESGRKVQS) form a disordered region. At S11 the chain carries Phosphoserine. K15 participates in a covalent cross-link: Glycyl lysine isopeptide (Lys-Gly) (interchain with G-Cter in SUMO2). G42 contacts ADP. G42 is an ATP binding site. Residue D93 participates in Mg(2+) binding. Positions 94, 95, 96, 97, 162, and 163 each coordinate ADP. ATP-binding residues include G94, T95, and T96. Residue S170 is modified to Phosphoserine. At K222 the chain carries N6-acetyllysine. Phosphoserine occurs at positions 243 and 244. At Y247 the chain carries Phosphotyrosine. Glycyl lysine isopeptide (Lys-Gly) (interchain with G-Cter in SUMO2) cross-links involve residues K248 and K249. The residue at position 252 (S252) is a Phosphoserine. An intrachain disulfide couples C366 to C372. A Glycyl lysine isopeptide (Lys-Gly) (interchain with G-Cter in SUMO2) cross-link involves residue K381. G411 serves as a coordination point for ADP. G411 is a binding site for ATP. Phosphothreonine occurs at positions 430 and 459. Residues G482, E483, E497, and K502 each coordinate ADP. An ATP-binding site is contributed by G482. E497 is an ATP binding site. The interval 526–545 (HKKKGDDQSRQGGAPDAGQE) is disordered.

Belongs to the TCP-1 chaperonin family. In terms of assembly, component of the chaperonin-containing T-complex (TRiC), a hexadecamer composed of two identical back-to-back stacked rings enclosing a protein folding chamber. Each ring is made up of eight different subunits: TCP1/CCT1, CCT2, CCT3, CCT4, CCT5, CCT6A/CCT6, CCT7, CCT8. Interacts with PACRG. Interacts with DNAAF4. Interacts with DLEC1.

It is found in the cytoplasm. It carries out the reaction ATP + H2O = ADP + phosphate + H(+). Component of the chaperonin-containing T-complex (TRiC), a molecular chaperone complex that assists the folding of actin, tubulin and other proteins upon ATP hydrolysis. The TRiC complex mediates the folding of WRAP53/TCAB1, thereby regulating telomere maintenance. As part of the TRiC complex may play a role in the assembly of BBSome, a complex involved in ciliogenesis regulating transports vesicles to the cilia. The polypeptide is T-complex protein 1 subunit gamma (CCT3) (Bos taurus (Bovine)).